The following is a 91-amino-acid chain: UPF0512 protein M (91 aa).

It belongs to the UPF0512 family.

The protein is UPF0512 protein M of Dictyostelium discoideum (Social amoeba).